The sequence spans 425 residues: Light-independent protochlorophyllide reductase subunit N (425 aa).

Cysteine 17, cysteine 42, and cysteine 103 together coordinate [4Fe-4S] cluster.

Belongs to the BchN/ChlN family. In terms of assembly, protochlorophyllide reductase is composed of three subunits; ChlL, ChlN and ChlB. Forms a heterotetramer of two ChlB and two ChlN subunits. Requires [4Fe-4S] cluster as cofactor.

The catalysed reaction is chlorophyllide a + oxidized 2[4Fe-4S]-[ferredoxin] + 2 ADP + 2 phosphate = protochlorophyllide a + reduced 2[4Fe-4S]-[ferredoxin] + 2 ATP + 2 H2O. It participates in porphyrin-containing compound metabolism; chlorophyll biosynthesis (light-independent). In terms of biological role, component of the dark-operative protochlorophyllide reductase (DPOR) that uses Mg-ATP and reduced ferredoxin to reduce ring D of protochlorophyllide (Pchlide) to form chlorophyllide a (Chlide). This reaction is light-independent. The NB-protein (ChlN-ChlB) is the catalytic component of the complex. The polypeptide is Light-independent protochlorophyllide reductase subunit N (Synechococcus sp. (strain CC9605)).